The chain runs to 245 residues: 1-(5-phosphoribosyl)-5-[(5-phosphoribosylamino)methylideneamino] imidazole-4-carboxamide isomerase (245 aa).

D8 functions as the Proton acceptor in the catalytic mechanism. D129 acts as the Proton donor in catalysis.

Belongs to the HisA/HisF family.

It is found in the cytoplasm. It carries out the reaction 1-(5-phospho-beta-D-ribosyl)-5-[(5-phospho-beta-D-ribosylamino)methylideneamino]imidazole-4-carboxamide = 5-[(5-phospho-1-deoxy-D-ribulos-1-ylimino)methylamino]-1-(5-phospho-beta-D-ribosyl)imidazole-4-carboxamide. It participates in amino-acid biosynthesis; L-histidine biosynthesis; L-histidine from 5-phospho-alpha-D-ribose 1-diphosphate: step 4/9. The chain is 1-(5-phosphoribosyl)-5-[(5-phosphoribosylamino)methylideneamino] imidazole-4-carboxamide isomerase from Rhodopseudomonas palustris (strain BisB18).